Here is a 1062-residue protein sequence, read N- to C-terminus: Platelet-derived growth factor receptor alpha (1062 aa).

The signal sequence occupies residues 1-27 (MFPPSSAPLLLPQLEELVVPLHTAFTL). 5 consecutive Ig-like C2-type domains span residues 28–96 (TCQG…VYVP), 91–184 (IYVY…VHGW), 190–281 (LHVE…KQIA), 287–381 (SEFM…RTVS), and 389–493 (PAVI…IKLV). The Extracellular portion of the chain corresponds to 28–504 (TCQGEATIAW…NGPHPELTVA (477 aa)). Cysteines 29 and 74 form a disulfide. Asn-79 and Asn-132 each carry an N-linked (GlcNAc...) asparagine glycan. 2 disulfides stabilise this stretch: Cys-124-Cys-165 and Cys-211-Cys-265. 5 N-linked (GlcNAc...) asparagine glycosylation sites follow: Asn-273, Asn-333, Asn-366, Asn-433, and Asn-444. The cysteines at positions 410 and 477 are disulfide-linked. The helical transmembrane segment at 505–525 (AAVLVLLVIVIISLIVLVVIW) threads the bilayer. The Cytoplasmic portion of the chain corresponds to 526–1062 (KQKPRYEIRW…CSDLVEDSFL (537 aa)). Residues Tyr-548 and Tyr-550 each carry the phosphotyrosine; by autocatalysis modification. One can recognise a Protein kinase domain in the interval 569 to 945 (LVLGRILGSG…HYERVNHEFL (377 aa)). ATP is bound by residues 575-583 (LGSGAFGKV) and Lys-603. A phosphotyrosine; by autocatalysis mark is found at Tyr-697, Tyr-708, Tyr-719, Tyr-731, and Tyr-739. The disordered stretch occupies residues 734–754 (LQGSNYDHPPSQKGSNDGEMD). Asp-793 functions as the Proton acceptor in the catalytic mechanism. Phosphotyrosine; by autocatalysis is present on residues Tyr-824 and Tyr-963. Positions 975–986 (KDRESGFDEQRL) are enriched in basic and acidic residues. Positions 975–1034 (KDRESGFDEQRLSSDSGYIIPLPDLDPISDEEYGKRNRHSSQTSEESAIETGSSSSTFAK) are disordered. Phosphotyrosine; by autocatalysis is present on Tyr-992. Residues 1014–1032 (SSQTSEESAIETGSSSSTF) are compositionally biased toward polar residues.

This sequence belongs to the protein kinase superfamily. Tyr protein kinase family. CSF-1/PDGF receptor subfamily. Interacts with homodimeric pdgfa, pdgfb and pdgfc, and with heterodimers formed by pdgfa and pdgfb. monomer in the absence of bound ligand. Interaction with dimeric pdgfa, pdgfb and/or pdgfc leads to receptor dimerization, where both pdgfra homodimers and heterodimers with pdgfrb are observed. Ubiquitinated, leading to its degradation. Post-translationally, autophosphorylated on tyrosine residues upon ligand binding. Autophosphorylation occurs in trans, i.e. one subunit of the dimeric receptor phosphorylates tyrosine residues on the other subunit.

Its subcellular location is the cell membrane. The enzyme catalyses L-tyrosyl-[protein] + ATP = O-phospho-L-tyrosyl-[protein] + ADP + H(+). With respect to regulation, present in an inactive conformation in the absence of bound ligand. Binding of pdgfa and/or pdgfb leads to dimerization and activation by autophosphorylation on tyrosine residues. Tyrosine-protein kinase that acts as a cell-surface receptor for pdgfa, pdgfb and pdgfc and plays an essential role in the regulation of embryonic development, cell proliferation, survival and chemotaxis. Depending on the context, promotes or inhibits cell proliferation and cell migration. Plays an important role in the differentiation of bone marrow-derived mesenchymal stem cells. Required for normal skeleton development. Required for normal development of the gastrointestinal tract. Plays a role in cell migration and chemotaxis in wound healing. Plays a role in platelet activation, secretion of agonists from platelet granules, and in thrombin-induced platelet aggregation. Binding of its cognate ligands - homodimeric pdgfa, homodimeric pdgfb, heterodimers formed by pdgfa and pdgfb or homodimeric pdgfc -leads to the activation of several signaling cascades; the response depends on the nature of the bound ligand and is modulated by the formation of heterodimers between pdgfra and pdgfrb. Phosphorylates pik3r1, plcg1, and ptpn11. Activation of plcg1 leads to the production of the cellular signaling molecules diacylglycerol and inositol 1,4,5-trisphosphate, mobilization of cytosolic Ca(2+) and the activation of protein kinase C. Phosphorylates pik3r1, the regulatory subunit of phosphatidylinositol 3-kinase, and thereby mediates activation of the AKT1 signaling pathway. Mediates activation of hras and of the MAP kinases mapk1/erk2 and/or mapk3/erk1. Promotes activation of STAT family members stat1, stat3 and stat5a and/or stat5b. Receptor signaling is down-regulated by protein phosphatases that dephosphorylate the receptor and its down-stream effectors, and by rapid internalization of the activated receptor. In Takifugu rubripes (Japanese pufferfish), this protein is Platelet-derived growth factor receptor alpha (pdgfra).